A 276-amino-acid polypeptide reads, in one-letter code: MGLKRFKPVTPGRRFMVISDFSDITKTEPEKSLLAPLKKTGGRNHHGRVTVRHRGGGHKRRYRIIDFKRYDKAGIPAKVLAIEYDPNRSARIALLLYADGEKRYILAPKGVNVGDTLMSGPDAEIRPGNALPLEKIPVGTLVHNVEFTPGKGGQIARAAGTYCQIMAKEGNYALLRMPSGELRKVHIKCYATVGVVGNEDHKNEVHGKAGRVRWLGRRPHVRGVAMNPVDHPHGGGEGRGKGHHPTSPWGLPTKGYKTRRGKRPSDKFIVRRRNEA.

A disordered region spans residues 223 to 276; the sequence is GVAMNPVDHPHGGGEGRGKGHHPTSPWGLPTKGYKTRRGKRPSDKFIVRRRNEA. Composition is skewed to basic and acidic residues over residues 230 to 240 and 263 to 276; these read DHPHGGGEGRG and RPSD…RNEA.

This sequence belongs to the universal ribosomal protein uL2 family. In terms of assembly, part of the 50S ribosomal subunit. Forms a bridge to the 30S subunit in the 70S ribosome.

Functionally, one of the primary rRNA binding proteins. Required for association of the 30S and 50S subunits to form the 70S ribosome, for tRNA binding and peptide bond formation. It has been suggested to have peptidyltransferase activity; this is somewhat controversial. Makes several contacts with the 16S rRNA in the 70S ribosome. The chain is Large ribosomal subunit protein uL2 from Thermotoga petrophila (strain ATCC BAA-488 / DSM 13995 / JCM 10881 / RKU-1).